A 180-amino-acid polypeptide reads, in one-letter code: Early nodulin-16 (180 aa).

The signal sequence occupies residues 1 to 22 (MASSSPILLMIIFSMWLLISHS). Residues 25 to 129 (TDYLIGDSHN…GLKLAVVVQN (105 aa)) form the Phytocyanin domain. N-linked (GlcNAc...) asparagine glycosylation occurs at Asn-67. An intrachain disulfide couples Cys-83 to Cys-117. An N-linked (GlcNAc...) asparagine glycan is attached at Asn-152. Residue Ser-154 is the site of GPI-anchor amidated serine attachment. The propeptide at 155 to 180 (GNKGGAAGLGFIMWLGVSLVMMMFLI) is removed in mature form.

This sequence belongs to the early nodulin-like (ENODL) family. Expressed in developing nodules upon symbiosis with Sinorhizobium meliloti.

The protein resides in the symbiosome. It is found in the cell membrane. In terms of biological role, may act as a carbohydrate transporter. This is Early nodulin-16 from Medicago truncatula (Barrel medic).